A 406-amino-acid polypeptide reads, in one-letter code: Eukaryotic initiation factor 4A-I (406 aa).

The segment at Met1–Gly21 is disordered. The residue at position 2 (Ser2) is an N-acetylserine. Ser4 carries the post-translational modification Phosphoserine. The Q motif motif lies at Asp32–Gln60. One can recognise a Helicase ATP-binding domain in the interval Ile63–Ile234. Ala76 to Thr83 provides a ligand contact to ATP. At Lys118 the chain carries N6-acetyllysine. Lys146 is covalently cross-linked (Glycyl lysine isopeptide (Lys-Gly) (interchain with G-Cter in SUMO2)). Thr158 carries the post-translational modification Phosphothreonine. Lys174 is modified (N6-acetyllysine). A DEAD box motif is present at residues Asp182–Asp185. The residue at position 193 (Lys193) is an N6-acetyllysine. A Glycyl lysine isopeptide (Lys-Gly) (interchain with G-Cter in SUMO2) cross-link involves residue Lys225. Lys238 is modified (N6-acetyllysine; alternate). Lys238 is covalently cross-linked (Glycyl lysine isopeptide (Lys-Gly) (interchain with G-Cter in SUMO2); alternate). Residues Gly245–Ile406 form the Helicase C-terminal domain. Residues Lys309, Lys369, and Lys381 each participate in a glycyl lysine isopeptide (Lys-Gly) (interchain with G-Cter in SUMO2) cross-link.

This sequence belongs to the DEAD box helicase family. eIF4A subfamily. As to quaternary structure, eIF4F is a multi-subunit complex, the composition of which varies with external and internal environmental conditions. It is composed of at least EIF4A, EIF4E and EIF4G1/EIF4G3. Interacts with PAIP1, EIF4E and UPF2. Found in a complex with XPO7, EIF4A1, ARHGAP1, VPS26A, VPS29, VPS35 and SFN. May interact with NOM1. Interacts with PDCD4; this interferes with the interaction between EIF4A and EIF4G. Interacts with RBM4. Interacts with DDX3X in an RNA-independent manner. Interacts with PKP1 (via N-terminus); the interaction promotes EIF4A1 recruitment to the cap-dependent translation complex and EIF4A1 ATPase activity.

Its subcellular location is the cytoplasm. It localises to the perinuclear region. It is found in the cell membrane. The protein resides in the stress granule. The enzyme catalyses ATP + H2O = ADP + phosphate + H(+). Functionally, ATP-dependent RNA helicase which is a subunit of the eIF4F complex involved in cap recognition and is required for mRNA binding to ribosome. In the current model of translation initiation, eIF4A unwinds RNA secondary structures in the 5'-UTR of mRNAs which is necessary to allow efficient binding of the small ribosomal subunit, and subsequent scanning for the initiator codon. As a result, promotes cell proliferation and growth. The sequence is that of Eukaryotic initiation factor 4A-I (EIF4A1) from Bos taurus (Bovine).